Consider the following 751-residue polypeptide: Dual specificity tyrosine-phosphorylation-regulated kinase 1A (751 aa).

Polar residues predominate over residues 59–68 (YNDQIQQPLP). 2 disordered regions span residues 59–81 (YNDQIQQPLPNQRRMPQTFRDPA) and 104–129 (YAKKKRRHQQGQGDDSSHKKERKVYN). The short motif at 109 to 126 (RRHQQGQGDDSSHKKERK) is the Bipartite nuclear localization signal element. The Protein kinase domain maps to 151 to 471 (YEIDSLIGKG…PYYALQHSFF (321 aa)). ATP is bound by residues 157 to 165 (IGKGSFGQV), lysine 180, and 230 to 233 (FEML). Aspartate 279 (proton acceptor) is an active-site residue. Residues 477–493 (EGTNTSNSVSTSPAMEQ) are compositionally biased toward polar residues. Disordered stretches follow at residues 477–532 (EGTN…HSGG), 580–667 (HVPS…GNQA), and 730–751 (GMDREDSPMTGVCVQQSPVASS). The span at 494–517 (SQSSGTTSSTSSSSGGSSGTSNSG) shows a compositional bias: low complexity. Positions 585–613 (QQNVPHHHGNGSHHHHHHHHHHHGQHVLS) are histidine-rich domain (HRD). The segment covering 589-609 (PHHHGNGSHHHHHHHHHHHGQ) has biased composition (basic residues). The span at 611–622 (VLSNRTRTRIYN) shows a compositional bias: polar residues. Composition is skewed to low complexity over residues 623–633 (SPSTSSSTQDS) and 642–660 (SMTSLSSSTTSSSTSSSST). Residues 742–751 (CVQQSPVASS) show a composition bias toward polar residues.

This sequence belongs to the protein kinase superfamily. CMGC Ser/Thr protein kinase family. MNB/DYRK subfamily. Autophosphorylated on tyrosine residues.

It localises to the nucleus. The protein resides in the nucleus speckle. It catalyses the reaction L-seryl-[protein] + ATP = O-phospho-L-seryl-[protein] + ADP + H(+). It carries out the reaction L-threonyl-[protein] + ATP = O-phospho-L-threonyl-[protein] + ADP + H(+). The enzyme catalyses L-tyrosyl-[protein] + ATP = O-phospho-L-tyrosyl-[protein] + ADP + H(+). The catalysed reaction is [DNA-directed RNA polymerase] + ATP = phospho-[DNA-directed RNA polymerase] + ADP + H(+). In terms of biological role, dual-specificity kinase which possesses both serine/threonine and tyrosine kinase activities. Exhibits a substrate preference for proline at position P+1 and arginine at position P-3. Plays an important role in double-strand breaks (DSBs) repair following DNA damage. Mechanistically, phosphorylates RNF169 and increases its ability to block accumulation of TP53BP1 at the DSB sites thereby promoting homologous recombination repair (HRR). Also acts as a positive regulator of transcription by acting as a CTD kinase that mediates phosphorylation of the CTD (C-terminal domain) of the large subunit of RNA polymerase II (RNAP II) POLR2A. Modulates alternative splicing by phosphorylating the splice factor SRSF6. Phosphorylates SEPTIN4, SEPTIN5 and SF3B1. The sequence is that of Dual specificity tyrosine-phosphorylation-regulated kinase 1A from Xenopus tropicalis (Western clawed frog).